Consider the following 535-residue polypeptide: Alpha-1,3-mannosyl-glycoprotein 4-beta-N-acetylglucosaminyltransferase A (535 aa).

Residues 1-4 (MRLR) lie on the Cytoplasmic side of the membrane. A helical; Signal-anchor for type II membrane protein membrane pass occupies residues 5–27 (NGTVATALAFITSFLTLSWYTTW). Residues 28 to 63 (QNGKEKLIAYQREFLALKERLRIAEHRISQRSSELN) adopt a coiled-coil conformation. Over 28-535 (QNGKEKLIAY…NEIHIKKATN (508 aa)) the chain is Lumenal. 2 N-linked (GlcNAc...) asparagine glycosylation sites follow: asparagine 77 and asparagine 458. Serine 474 carries the post-translational modification Phosphoserine.

This sequence belongs to the glycosyltransferase 54 family. A divalent metal cation is required as a cofactor. In terms of processing, N-glycosylated.

It is found in the golgi apparatus membrane. The protein resides in the secreted. The catalysed reaction is N(4)-{beta-D-GlcNAc-(1-&gt;2)-alpha-D-Man-(1-&gt;3)-[beta-D-GlcNAc-(1-&gt;2)-alpha-D-Man-(1-&gt;6)]-beta-D-Man-(1-&gt;4)-beta-D-GlcNAc-(1-&gt;4)-beta-D-GlcNAc}-L-asparaginyl-[protein] + UDP-N-acetyl-alpha-D-glucosamine = N(4)-{beta-D-GlcNAc-(1-&gt;2)-[beta-D-GlcNAc-(1-&gt;4)]-alpha-D-Man-(1-&gt;3)-[beta-D-GlcNAc-(1-&gt;2)-alpha-D-Man-(1-&gt;6)]-beta-D-Man-(1-&gt;4)-beta-D-GlcNAc-(1-&gt;4)-beta-D-GlcNAc}-L-asparaginyl-[protein] + UDP + H(+). It catalyses the reaction an N(4)-{beta-D-GlcNAc-(1-&gt;2)-alpha-D-Man-(1-&gt;3)-[alpha-D-Man-(1-&gt;6)]-beta-D-Man-(1-&gt;4)-beta-D-GlcNAc-(1-&gt;4)-beta-D-GlcNAc}-L-asparaginyl-[protein] + UDP-N-acetyl-alpha-D-glucosamine = an N(4)-{beta-D-GlcNAc-(1-&gt;2)-[beta-D-GlcNAc-(1-&gt;4)]-alpha-D-Man-(1-&gt;3)-[alpha-D-Man-(1-&gt;6)]-beta-D-Man-(1-&gt;4)-beta-D-GlcNAc-(1-&gt;4)-beta-D-GlcNAc}-L-asparaginyl-[protein] + UDP + H(+). The enzyme catalyses an N(4)-{beta-D-GlcNAc-(1-&gt;2)-alpha-D-Man-(1-&gt;3)-[beta-D-GlcNAc-(1-&gt;2)-[beta-D-GlcNAc-(1-&gt;6)]-alpha-D-Man-(1-&gt;6)]-beta-D-Man-(1-&gt;4)-beta-D-GlcNAc-(1-&gt;4)-beta-D-GlcNAc}-L-asparaginyl-[protein] + UDP-N-acetyl-alpha-D-glucosamine = an N(4)-{beta-D-GlcNAc-(1-&gt;2)-[beta-D-GlcNAc-(1-&gt;4)]-alpha-D-Man-(1-&gt;3)-[beta-D-GlcNAc-(1-&gt;2)-[beta-D-GlcNAc-(1-&gt;6)]-alpha-D-Man-(1-&gt;6)]-beta-D-Man-(1-&gt;4)-beta-D-GlcNAc-(1-&gt;4)-beta-D-GlcNAc}-L-asparaginyl-[protein] + UDP + H(+). It carries out the reaction an N(4)-{beta-D-GlcNAc-(1-&gt;2)-alpha-D-Man-(1-&gt;3)-[beta-D-GlcNAc-(1-&gt;2)-alpha-D-Man-(1-&gt;6)]-beta-D-Man-(1-&gt;4)-beta-D-GlcNAc-(1-&gt;4)-[alpha-L-Fuc-(1-&gt;6)]-beta-D-GlcNAc}-L-asparaginyl-[protein] + UDP-N-acetyl-alpha-D-glucosamine = N(4)-{beta-D-GlcNAc-(1-&gt;2)-[beta-D-GlcNAc-(1-&gt;4)]-alpha-D-Man-(1-&gt;3)-[beta-D-GlcNAc-(1-&gt;2)-alpha-D-Man-(1-&gt;6)]-beta-D-Man-(1-&gt;4)-beta-D-GlcNAc-(1-&gt;4)-[alpha-L-Fuc-(1-&gt;6)]-beta-D-GlcNAc}-asparaginyl-[protein] + UDP + H(+). The catalysed reaction is an N(4)-{beta-D-GlcNAc-(1-&gt;2)-alpha-D-Man-(1-&gt;3)-[beta-D-Gal-(1-&gt;4)-beta-D-GlcNAc-(1-&gt;2)-alpha-D-Man-(1-&gt;6)]-beta-D-Man-(1-&gt;4)-beta-D-GlcNAc-(1-&gt;4)-beta-D-GlcNAc}-L-asparaginyl-[protein] + UDP-N-acetyl-alpha-D-glucosamine = an N(4)-{beta-D-GlcNAc-(1-&gt;2)-[beta-D-GlcNAc-(1-&gt;4)]-alpha-D-Man-(1-&gt;3)-[beta-D-Gal-(1-&gt;4)-beta-D-GlcNAc-(1-&gt;2)-alpha-D-Man-(1-&gt;6)]-beta-D-Man-(1-&gt;4)-beta-D-GlcNAc-(1-&gt;4)-beta-D-GlcNAc}-L-asparaginyl-[protein] + UDP + H(+). It catalyses the reaction N(4)-{beta-D-GlcNAc-(1-&gt;2)-alpha-D-Man-(1-&gt;3)-[alpha-D-Man-(1-&gt;3)-{alpha-D-Man-(1-&gt;6)}-alpha-D-Man-(1-&gt;6)]-beta-D-Man-(1-&gt;4)-beta-D-GlcNAc-(1-&gt;4)-beta-D-GlcNAc}-asparaginyl-[protein] + UDP-N-acetyl-alpha-D-glucosamine = N(4)-{beta-D-GlcNAc-(1-&gt;2)-[beta-D-GlcNAc-(1-&gt;4)]-alpha-D-Man-(1-&gt;3)-[alpha-D-Man-(1-&gt;3)-{alpha-D-Man-(1-&gt;6)}-alpha-D-Man-(1-&gt;6)]-beta-D-Man-(1-&gt;4)-beta-D-GlcNAc-(1-&gt;4)-beta-D-GlcNAc}-asparaginyl-[protein] + UDP + H(+). The enzyme catalyses N(4)-{beta-D-GlcNAc-(1-&gt;2)-alpha-D-Man-(1-&gt;3)-beta-D-Man-(1-&gt;4)-beta-D-GlcNAc-(1-&gt;4)-beta-D-GlcNAc}-asparaginyl-[protein] + UDP-N-acetyl-alpha-D-glucosamine = N(4)-{beta-D-GlcNAc-(1-&gt;2)-[beta-D-GlcNAc-(1-&gt;4)]-alpha-D-Man-(1-&gt;3)-beta-D-Man-(1-&gt;4)-beta-D-GlcNAc-(1-&gt;4)-beta-D-GlcNAc}-asparaginyl-[protein] + UDP + H(+). It functions in the pathway protein modification; protein glycosylation. With respect to regulation, inhibited by UDP. Glycosyltransferase that catalyze the transfer of GlcNAc from UDP-GlcNAc to the GlcNAcbeta1-2Manalpha1-3 arm of the core structure of N-linked glycans through a beta1-4 linkage and participates in the production of tri- and tetra-antennary N-linked sugar chains. Involved in glucose transport by mediating SLC2A2/GLUT2 glycosylation, thereby controlling cell-surface expression of SLC2A2 in pancreatic beta cells. The sequence is that of Alpha-1,3-mannosyl-glycoprotein 4-beta-N-acetylglucosaminyltransferase A from Pongo abelii (Sumatran orangutan).